The following is an 858-amino-acid chain: Elongation factor 2 (858 aa).

The 346-residue stretch at 17-362 (ANIRNMSVIA…MITIHLPSPV (346 aa)) folds into the tr-type G domain. 26 to 33 (AHVDHGKS) serves as a coordination point for GTP. Thr54 is subject to Phosphothreonine. Thr57 is modified (phosphothreonine; by EEF2K). A Phosphothreonine modification is found at Thr59. Lys152 is subject to N6-succinyllysine. Residues 158–161 (NKMD) and 216–218 (SGL) each bind GTP. Residue Lys235 is modified to N6-acetyllysine. Lys239 carries the N6-acetyllysine; alternate modification. Residue Lys239 forms a Glycyl lysine isopeptide (Lys-Gly) (interchain with G-Cter in SUMO1); alternate linkage. Tyr265 is subject to Phosphotyrosine; by CSK. The residue at position 272 (Lys272) is an N6-acetyllysine; alternate. Lys272 carries the N6-succinyllysine; alternate modification. Lys275 carries the post-translational modification N6-acetyllysine. Residue Lys322 forms a Glycyl lysine isopeptide (Lys-Gly) (interchain with G-Cter in SUMO) linkage. Residue Ser325 is modified to Phosphoserine. At Tyr373 the chain carries Phosphotyrosine; by CSK. At Thr435 the chain carries Phosphothreonine. 2 positions are modified to N6-acetyllysine: Lys439 and Lys445. Ser502 carries the post-translational modification Phosphoserine. Lys525 carries the post-translational modification N6,N6,N6-trimethyllysine; by EEF2KMT. Residue Lys529 forms a Glycyl lysine isopeptide (Lys-Gly) (interchain with G-Cter in SUMO) linkage. Lys572 is subject to N6-succinyllysine. The residue at position 595 (Ser595) is a Phosphoserine; by CDK2. Lys619 carries the N6-acetyllysine modification. Residue His715 is modified to Diphthamide.

This sequence belongs to the TRAFAC class translation factor GTPase superfamily. Classic translation factor GTPase family. EF-G/EF-2 subfamily. As to quaternary structure, binds to 80S ribosomes. Actively translating ribosomes show mutually exclusive binding of eIF5a (EIF5A or EIF5A2) and EEF2/eEF2. Interacts with SERBP1; interaction sequesters EEF2/eEF2 at the A-site of the ribosome, thereby blocking the interaction sites of the mRNA-tRNA complex, promoting ribosome stabilization and hibernation. Interacts with HABP4; interaction takes place at the A-site of hibernating ribosomes and promotes ribosome stabilization. Component of the mRNA surveillance SURF complex, at least composed of ERF1, ERF3 (ERF3A or ERF3B), EEF2, UPF1/RENT1, SMG1, SMG8 and SMG9. Interacts with RBPMS2. Diphthamide is 2-[3-carboxyamido-3-(trimethyl-ammonio)propyl]histidine. Post-translationally, phosphorylation by EF-2 kinase completely inactivates EF-2; it requires prior phosphorylation by CDK2 at Ser-595 during mitotic prometaphase. Phosphorylation by CSK promotes SUMOylation, proteolytic cleavage, and nuclear translocation if the C-terminal fragment. In terms of processing, proteolytically processed at two sites following phosphorylation by CSK. SUMOylated following phosphorylation by CSK, promotes proteolytic cleavage. Post-translationally, ISGylated.

The protein resides in the cytoplasm. Its subcellular location is the nucleus. The catalysed reaction is GTP + H2O = GDP + phosphate + H(+). In terms of biological role, catalyzes the GTP-dependent ribosomal translocation step during translation elongation. During this step, the ribosome changes from the pre-translocational (PRE) to the post-translocational (POST) state as the newly formed A-site-bound peptidyl-tRNA and P-site-bound deacylated tRNA move to the P and E sites, respectively. Catalyzes the coordinated movement of the two tRNA molecules, the mRNA and conformational changes in the ribosome. This Rattus norvegicus (Rat) protein is Elongation factor 2 (Eef2).